Here is a 315-residue protein sequence, read N- to C-terminus: tRNA pseudouridine synthase B (315 aa).

Aspartate 54 serves as the catalytic Nucleophile.

It belongs to the pseudouridine synthase TruB family. Type 1 subfamily.

It catalyses the reaction uridine(55) in tRNA = pseudouridine(55) in tRNA. In terms of biological role, responsible for synthesis of pseudouridine from uracil-55 in the psi GC loop of transfer RNAs. In Cupriavidus taiwanensis (strain DSM 17343 / BCRC 17206 / CCUG 44338 / CIP 107171 / LMG 19424 / R1) (Ralstonia taiwanensis (strain LMG 19424)), this protein is tRNA pseudouridine synthase B.